A 157-amino-acid polypeptide reads, in one-letter code: Succinate dehydrogenase [ubiquinone] cytochrome b small subunit, mitochondrial (157 aa).

A mitochondrion-targeting transit peptide spans 1–45 (MAALVLLRAGLARPRGVPTALLRGTLLRHSAVLTAAADRSAPARQ). The Mitochondrial matrix segment spans residues 46-61 (SHGGAPQGHGSSKAAS). Residues 62-83 (LHWTSERAVSALLLGLLPAAYL) traverse the membrane as a helical segment. Residues 84 to 88 (YPGPA) lie on the Mitochondrial intermembrane side of the membrane. The helical transmembrane segment at 89 to 109 (VDYSLAAALTLHGHWGLGQVI) threads the bilayer. Histidine 100 serves as a coordination point for heme b. Residues 110-118 (TDYVHGDTP) are Mitochondrial matrix-facing. Tyrosine 112 contacts a ubiquinone. The chain crosses the membrane as a helical span at residues 119–140 (IKVANTGLYVLSAITFTGLCYF). Residues 141–157 (NYYDVGICKAVAMLWSI) lie on the Mitochondrial intermembrane side of the membrane.

This sequence belongs to the CybS family. Component of complex II composed of four subunits: the flavoprotein (FP) SDHA, iron-sulfur protein (IP) SDHB, and a cytochrome b560 composed of SDHC and SDHD.

It is found in the mitochondrion inner membrane. It participates in carbohydrate metabolism; tricarboxylic acid cycle. Membrane-anchoring subunit of succinate dehydrogenase (SDH) that is involved in complex II of the mitochondrial electron transport chain and is responsible for transferring electrons from succinate to ubiquinone (coenzyme Q). SDH also oxidizes malate to the non-canonical enol form of oxaloacetate, enol-oxaloacetate. Enol-oxaloacetate, which is a potent inhibitor of the succinate dehydrogenase activity, is further isomerized into keto-oxaloacetate. The sequence is that of Succinate dehydrogenase [ubiquinone] cytochrome b small subunit, mitochondrial (SDHD) from Gallus gallus (Chicken).